The primary structure comprises 239 residues: Probable septum site-determining protein MinC (239 aa).

Belongs to the MinC family. Interacts with MinD and FtsZ.

In terms of biological role, cell division inhibitor that blocks the formation of polar Z ring septums. Rapidly oscillates between the poles of the cell to destabilize FtsZ filaments that have formed before they mature into polar Z rings. Prevents FtsZ polymerization. This Colwellia psychrerythraea (strain 34H / ATCC BAA-681) (Vibrio psychroerythus) protein is Probable septum site-determining protein MinC.